The following is a 341-amino-acid chain: Ribosomal RNA small subunit methyltransferase H (341 aa).

Residues 47-49 (GGY), Asp64, Phe91, Asp109, and Gln116 each bind S-adenosyl-L-methionine.

It belongs to the methyltransferase superfamily. RsmH family.

It is found in the cytoplasm. The enzyme catalyses cytidine(1402) in 16S rRNA + S-adenosyl-L-methionine = N(4)-methylcytidine(1402) in 16S rRNA + S-adenosyl-L-homocysteine + H(+). In terms of biological role, specifically methylates the N4 position of cytidine in position 1402 (C1402) of 16S rRNA. This Rhizobium rhizogenes (strain K84 / ATCC BAA-868) (Agrobacterium radiobacter) protein is Ribosomal RNA small subunit methyltransferase H.